The following is a 319-amino-acid chain: Transcriptional regulator LsrR (319 aa).

The H-T-H motif DNA-binding region spans 32-55; that stretch reads QSEISERLGLTRLKVSRLLEKGHQ.

This sequence belongs to the SorC transcriptional regulatory family.

The protein localises to the cytoplasm. Inactivated by phosphorylated autoinducer-2 (phospho-AI-2). Phospho-AI-2 acts by binding to LsrR, which is then unable to bind to the promoter regions, allowing the transcription of the target genes. Functionally, transcriptional regulator that represses the expression of the lsr operon in the absence of the quorum-sensing signaling molecule autoinducer 2 (AI-2). It also represses the expression of the lsrRK operon. Acts by binding to the intergenic region between the lsr operon and lsrR. In the presence of phosphorylated autoinducer-2 (phospho-AI-2), LsrR is inactivated, leading to the transcription of the genes. This chain is Transcriptional regulator LsrR (lsrR), found in Salmonella paratyphi A (strain ATCC 9150 / SARB42).